The chain runs to 714 residues: Forkhead box protein P2 (714 aa).

Residues 1–28 (MMQESATETISNSSMNQNGMSTLSSQLD) are compositionally biased toward polar residues. Disordered stretches follow at residues 1–45 (MMQE…SEVS) and 280–338 (DNGI…TGAS). Residues 291–304 (TTNNSSSTTSSTTS) are compositionally biased toward low complexity. The span at 314–323 (SIVNGQSSVL) shows a compositional bias: polar residues. Residues 325 to 336 (ARRDSSSHEETG) are compositionally biased toward basic and acidic residues. The C2H2-type zinc-finger motif lies at 345–370 (GVCKWPGCESICEDFGQFLKHLNNEH). The tract at residues 387–408 (VQQLEIQLSKERERLQAMMTHL) is leucine-zipper. The interval 421–425 (PLNLV) is CTBP1-binding. Residues 437–458 (TSPQSLPQTPTTPTAPVTPITQ) are compositionally biased toward low complexity. Residues 437–464 (TSPQSLPQTPTTPTAPVTPITQGPSVIT) are disordered. A DNA-binding region (fork-head) is located at residues 503 to 593 (RPPFTYATLI…SQKITGSPTL (91 aa)). 2 disordered regions span residues 648–667 (LDHIDSNGNSSPGCSPQPHI) and 677–714 (VIAEDEDCPMSLVTTANHSPELEDDREIEEEPLSEDLE). Residues 698-714 (LEDDREIEEEPLSEDLE) are compositionally biased toward acidic residues.

As to quaternary structure, forms homodimers and heterodimers with FOXP1 and FOXP4. Dimerization is required for DNA-binding. Interacts with CTBP1. Interacts with FOXP1. Interacts with TBR1. Interacts with ZMYM2. In terms of tissue distribution, highest expression in lung. Lower expression in spleen, skeletal muscle, brain, kidney and small intestine.

The protein resides in the nucleus. Transcriptional repressor that may play a role in the specification and differentiation of lung epithelium. May also play a role in developing neural, gastrointestinal and cardiovascular tissues. Can act with CTBP1 to synergistically repress transcription but CTPBP1 is not essential. Plays a role in synapse formation by regulating SRPX2 levels. In Mus musculus (Mouse), this protein is Forkhead box protein P2 (Foxp2).